The sequence spans 318 residues: Ribose-phosphate pyrophosphokinase 3 (318 aa).

Position 96 to 101 (96 to 101 (RQDKKD)) interacts with ATP. Aspartate 128, histidine 130, aspartate 139, and aspartate 143 together coordinate Mg(2+). Histidine 130 serves as a coordination point for ATP. The segment at 212–227 (NDRVAILVDDMADTCV) is binding of phosphoribosylpyrophosphate.

It belongs to the ribose-phosphate pyrophosphokinase family. In terms of assembly, homodimer. The active form is probably a hexamer composed of 3 homodimers. Mg(2+) is required as a cofactor. In terms of tissue distribution, testis.

It carries out the reaction D-ribose 5-phosphate + ATP = 5-phospho-alpha-D-ribose 1-diphosphate + AMP + H(+). The protein operates within metabolic intermediate biosynthesis; 5-phospho-alpha-D-ribose 1-diphosphate biosynthesis; 5-phospho-alpha-D-ribose 1-diphosphate from D-ribose 5-phosphate (route I): step 1/1. Its activity is regulated as follows. Activated by magnesium and inorganic phosphate. In terms of biological role, catalyzes the synthesis of phosphoribosylpyrophosphate (PRPP) that is essential for nucleotide synthesis. The protein is Ribose-phosphate pyrophosphokinase 3 (PRPS1L1) of Homo sapiens (Human).